Consider the following 203-residue polypeptide: Orotate phosphoribosyltransferase (203 aa).

5-phospho-alpha-D-ribose 1-diphosphate is bound by residues R94, K98, H100, and 120–128 (EDLISTGGS). S124 is an orotate binding site.

This sequence belongs to the purine/pyrimidine phosphoribosyltransferase family. PyrE subfamily. Homodimer. It depends on Mg(2+) as a cofactor.

It carries out the reaction orotidine 5'-phosphate + diphosphate = orotate + 5-phospho-alpha-D-ribose 1-diphosphate. It participates in pyrimidine metabolism; UMP biosynthesis via de novo pathway; UMP from orotate: step 1/2. Functionally, catalyzes the transfer of a ribosyl phosphate group from 5-phosphoribose 1-diphosphate to orotate, leading to the formation of orotidine monophosphate (OMP). This is Orotate phosphoribosyltransferase from Staphylococcus aureus (strain MSSA476).